We begin with the raw amino-acid sequence, 122 residues long: Large ribosomal subunit protein uL18 (122 aa).

This sequence belongs to the universal ribosomal protein uL18 family. In terms of assembly, part of the 50S ribosomal subunit; part of the 5S rRNA/L5/L18/L25 subcomplex. Contacts the 5S and 23S rRNAs.

This is one of the proteins that bind and probably mediate the attachment of the 5S RNA into the large ribosomal subunit, where it forms part of the central protuberance. The sequence is that of Large ribosomal subunit protein uL18 from Hydrogenobaculum sp. (strain Y04AAS1).